A 122-amino-acid polypeptide reads, in one-letter code: Large ribosomal subunit protein uL14 (122 aa).

It belongs to the universal ribosomal protein uL14 family. Part of the 50S ribosomal subunit. Forms a cluster with proteins L3 and L19. In the 70S ribosome, L14 and L19 interact and together make contacts with the 16S rRNA in bridges B5 and B8.

Binds to 23S rRNA. Forms part of two intersubunit bridges in the 70S ribosome. The polypeptide is Large ribosomal subunit protein uL14 (Mycobacterium tuberculosis (strain ATCC 25177 / H37Ra)).